The following is a 154-amino-acid chain: N-acetylneuraminate anomerase NanQ (154 aa).

The protein belongs to the NanQ anomerase family. Zn(2+) serves as cofactor.

It localises to the cytoplasm. It catalyses the reaction N-acetyl-alpha-neuraminate = aceneuramate. It carries out the reaction N-acetyl-beta-neuraminate = aceneuramate. Inhibited by 1,10-phenanthroline. In terms of biological role, opens both the alpha- and beta-forms of N-acetylneuraminate (sialic acid; Neu5Ac) to provide aceneuramate, the preferred substrate for NanA. Has preferential activity on the beta-anomer rather than the alpha-anomer. Accelerates a reaction that is spontaneous at slightly alkaline pH, facilitates the reaction at acidic pH. The chain is N-acetylneuraminate anomerase NanQ from Escherichia coli (strain K12).